Consider the following 201-residue polypeptide: Potassium-transporting ATPase KdpC subunit (201 aa).

The chain crosses the membrane as a helical span at residues 7–27; that stretch reads PALVLLVALTAITGLAYPLAV.

This sequence belongs to the KdpC family. The system is composed of three essential subunits: KdpA, KdpB and KdpC.

It localises to the cell inner membrane. In terms of biological role, part of the high-affinity ATP-driven potassium transport (or Kdp) system, which catalyzes the hydrolysis of ATP coupled with the electrogenic transport of potassium into the cytoplasm. This subunit acts as a catalytic chaperone that increases the ATP-binding affinity of the ATP-hydrolyzing subunit KdpB by the formation of a transient KdpB/KdpC/ATP ternary complex. This Methylorubrum extorquens (strain CM4 / NCIMB 13688) (Methylobacterium extorquens) protein is Potassium-transporting ATPase KdpC subunit.